The sequence spans 337 residues: Fructose-1,6-bisphosphatase class 1 (337 aa).

Residues Glu-92, Asp-114, Leu-116, and Asp-117 each coordinate Mg(2+). Residues Asp-117–Ser-120, Asn-209, and Lys-275 contribute to the substrate site. Glu-281 is a Mg(2+) binding site.

The protein belongs to the FBPase class 1 family. Homotetramer. Mg(2+) is required as a cofactor.

The protein localises to the cytoplasm. It carries out the reaction beta-D-fructose 1,6-bisphosphate + H2O = beta-D-fructose 6-phosphate + phosphate. Its pathway is carbohydrate biosynthesis; gluconeogenesis. The chain is Fructose-1,6-bisphosphatase class 1 from Thiobacillus denitrificans (strain ATCC 25259 / T1).